We begin with the raw amino-acid sequence, 113 residues long: Integration host factor subunit alpha (113 aa).

Positions 59–80 (GNFQVRDKPPRPGRNPKTGETI) are disordered.

Belongs to the bacterial histone-like protein family. As to quaternary structure, heterodimer of an alpha and a beta chain.

Functionally, this protein is one of the two subunits of integration host factor, a specific DNA-binding protein that functions in genetic recombination as well as in transcriptional and translational control. The protein is Integration host factor subunit alpha of Bordetella bronchiseptica (strain ATCC BAA-588 / NCTC 13252 / RB50) (Alcaligenes bronchisepticus).